Here is a 1191-residue protein sequence, read N- to C-terminus: Laminin subunit gamma-2 (1191 aa).

An N-terminal signal peptide occupies residues methionine 1–alanine 21. Disulfide bonds link cysteine 28-cysteine 37, cysteine 30-cysteine 53, cysteine 56-cysteine 65, cysteine 68-cysteine 81, cysteine 84-cysteine 96, cysteine 86-cysteine 102, cysteine 104-cysteine 113, cysteine 116-cysteine 128, cysteine 139-cysteine 150, cysteine 141-cysteine 155, cysteine 157-cysteine 166, and cysteine 169-cysteine 184. Laminin EGF-like domains lie at cysteine 28–proline 83, cysteine 84–arginine 130, and cysteine 139–glutamine 186. The Laminin EGF-like 4; first part domain occupies cysteine 187 to cysteine 196. The Laminin IV type A domain occupies glutamine 213–arginine 381. Asparagine 342 and asparagine 362 each carry an N-linked (GlcNAc...) asparagine glycan. The 34-residue stretch at cysteine 382–proline 415 folds into the Laminin EGF-like 4; second part domain. Laminin EGF-like domains follow at residues cysteine 416 to proline 461, cysteine 462 to arginine 516, and cysteine 517 to alanine 572. Disulfide bonds link cysteine 462-cysteine 470, cysteine 464-cysteine 481, cysteine 484-cysteine 493, cysteine 496-cysteine 514, cysteine 517-cysteine 531, cysteine 519-cysteine 538, cysteine 541-cysteine 550, cysteine 553-cysteine 570, cysteine 573-cysteine 585, cysteine 575-cysteine 591, and cysteine 593-cysteine 602. The N-linked (GlcNAc...) asparagine glycan is linked to asparagine 526. Positions cysteine 573 to cysteine 602 constitute a Laminin EGF-like 8; truncated domain. The Cell attachment site motif lies at arginine 586–aspartate 588. The tract at residues aspartate 603–glutamine 1191 is domain II and I. Coiled-coil stretches lie at residues alanine 612–leucine 710 and leucine 759–aspartate 786. Residue serine 805 is glycosylated (O-linked (Xyl...) (chondroitin sulfate) serine). N-linked (GlcNAc...) asparagine glycosylation occurs at asparagine 941. A coiled-coil region spans residues glutamate 946–leucine 996. An N-linked (GlcNAc...) asparagine glycan is attached at asparagine 1032. Positions leucine 1139–leucine 1178 form a coiled coil.

Laminin is a complex glycoprotein, consisting of three different polypeptide chains (alpha, beta, gamma), which are bound to each other by disulfide bonds into a cross-shaped molecule comprising one long and three short arms with globules at each end. Gamma-2 is a subunit of laminin-5 (laminin-332 or epiligrin/kalinin/nicein). Binds to fibulin-1, fibulin-1c, fibulin-2 and nidogen. Post-translationally, O-glycosylated; contains chondroitin sulfate (CS). Epithelial cells of many tissues, particularly high levels in tongue, hair follicles and kidney. Basement membranes of the collecting tubules of kidney and pancreas.

The protein resides in the secreted. The protein localises to the extracellular space. It localises to the extracellular matrix. It is found in the basement membrane. Functionally, binding to cells via a high affinity receptor, laminin is thought to mediate the attachment, migration and organization of cells into tissues during embryonic development by interacting with other extracellular matrix components. The polypeptide is Laminin subunit gamma-2 (Lamc2) (Mus musculus (Mouse)).